A 97-amino-acid chain; its full sequence is Glutamyl-tRNA(Gln) amidotransferase subunit C (97 aa).

The protein belongs to the GatC family. As to quaternary structure, heterotrimer of A, B and C subunits.

It catalyses the reaction L-glutamyl-tRNA(Gln) + L-glutamine + ATP + H2O = L-glutaminyl-tRNA(Gln) + L-glutamate + ADP + phosphate + H(+). The enzyme catalyses L-aspartyl-tRNA(Asn) + L-glutamine + ATP + H2O = L-asparaginyl-tRNA(Asn) + L-glutamate + ADP + phosphate + 2 H(+). Functionally, allows the formation of correctly charged Asn-tRNA(Asn) or Gln-tRNA(Gln) through the transamidation of misacylated Asp-tRNA(Asn) or Glu-tRNA(Gln) in organisms which lack either or both of asparaginyl-tRNA or glutaminyl-tRNA synthetases. The reaction takes place in the presence of glutamine and ATP through an activated phospho-Asp-tRNA(Asn) or phospho-Glu-tRNA(Gln). The protein is Glutamyl-tRNA(Gln) amidotransferase subunit C of Sulfurisphaera tokodaii (strain DSM 16993 / JCM 10545 / NBRC 100140 / 7) (Sulfolobus tokodaii).